Consider the following 126-residue polypeptide: Glycine cleavage system H protein (126 aa).

The Lipoyl-binding domain maps to threonine 23 to lysine 104. Residue lysine 64 is modified to N6-lipoyllysine.

Belongs to the GcvH family. As to quaternary structure, the glycine cleavage system is composed of four proteins: P, T, L and H. The cofactor is (R)-lipoate.

In terms of biological role, the glycine cleavage system catalyzes the degradation of glycine. The H protein shuttles the methylamine group of glycine from the P protein to the T protein. This is Glycine cleavage system H protein from Paraburkholderia xenovorans (strain LB400).